A 753-amino-acid polypeptide reads, in one-letter code: Oligopeptide transporter 5 (753 aa).

Transmembrane regions (helical) follow at residues 56 to 76, 80 to 100, 132 to 152, 163 to 183, 224 to 244, 296 to 316, 368 to 388, 432 to 452, 461 to 481, 506 to 528, 544 to 564, 583 to 603, 615 to 635, 662 to 682, and 695 to 715; these read TWFL…FFGY, PLTV…KLMA, ITIF…LTIV, AAAM…AGMF, FFLI…YLFP, FFAI…ILPI, YLSI…TATI, WWFV…CEGF, WGLL…GVIL, PLAN…YFVG, FIVQ…TTWW, PWTC…GIIG, PGMN…WFFA, AKAV…YYIF, and ILSA…YFAL.

This sequence belongs to the oligopeptide OPT transporter (TC 2.A.67.1) family. As to expression, expressed predominantly in flowers, and at a very low level in leaves and roots.

The protein resides in the membrane. In terms of biological role, involved in the translocation of tetra- and pentapeptides across the cellular membrane in an energy-dependent manner. This is Oligopeptide transporter 5 (OPT5) from Arabidopsis thaliana (Mouse-ear cress).